The following is a 302-amino-acid chain: NAD kinase (302 aa).

Residue Asp-79 is the Proton acceptor of the active site. Residues Asp-79 to Gly-80, Asn-153 to Asp-154, Arg-181, Asp-183, Thr-194 to Ser-199, Ala-218, and Gln-252 each bind NAD(+).

This sequence belongs to the NAD kinase family. Requires a divalent metal cation as cofactor.

Its subcellular location is the cytoplasm. It catalyses the reaction NAD(+) + ATP = ADP + NADP(+) + H(+). In terms of biological role, involved in the regulation of the intracellular balance of NAD and NADP, and is a key enzyme in the biosynthesis of NADP. Catalyzes specifically the phosphorylation on 2'-hydroxyl of the adenosine moiety of NAD to yield NADP. The sequence is that of NAD kinase from Ralstonia nicotianae (strain ATCC BAA-1114 / GMI1000) (Ralstonia solanacearum).